Consider the following 509-residue polypeptide: ATP synthase subunit alpha (509 aa).

Residue 169–176 (GDRQTGKT) participates in ATP binding.

It belongs to the ATPase alpha/beta chains family. As to quaternary structure, F-type ATPases have 2 components, CF(1) - the catalytic core - and CF(0) - the membrane proton channel. CF(1) has five subunits: alpha(3), beta(3), gamma(1), delta(1), epsilon(1). CF(0) has three main subunits: a(1), b(2) and c(9-12). The alpha and beta chains form an alternating ring which encloses part of the gamma chain. CF(1) is attached to CF(0) by a central stalk formed by the gamma and epsilon chains, while a peripheral stalk is formed by the delta and b chains.

The protein localises to the cell inner membrane. The catalysed reaction is ATP + H2O + 4 H(+)(in) = ADP + phosphate + 5 H(+)(out). Its function is as follows. Produces ATP from ADP in the presence of a proton gradient across the membrane. The alpha chain is a regulatory subunit. The sequence is that of ATP synthase subunit alpha from Agrobacterium fabrum (strain C58 / ATCC 33970) (Agrobacterium tumefaciens (strain C58)).